Reading from the N-terminus, the 371-residue chain is Geranylgeranyl transferase type-2 subunit alpha (371 aa).

PFTA repeat units lie at residues 45–79 (YSDEALIKTNELLIINPEFYTIWNYRREILINNYS), 92–126 (ILNQDLNFVLVQLKKFPKCYWIWNHRRWLLFELVK), 131–165 (NWKYEFGVVSKLLDLDQRNFHGWHYRRFVVKNMEL), 177–211 (INLDEFNYTTLKIQKDFSNFSAWHNRTKLIPKIYN), and 242–276 (LLKNDLEMIKTGVYMSPEDTSVWLYLYWLLTDDLF).

It belongs to the protein prenyltransferase subunit alpha family. In terms of assembly, heterodimer of an alpha and a beta subunit.

It carries out the reaction geranylgeranyl diphosphate + L-cysteinyl-[protein] = S-geranylgeranyl-L-cysteinyl-[protein] + diphosphate. Catalyzes the transfer of a geranyl-geranyl moiety from geranyl-geranyl pyrophosphate to proteins having the C-terminal -XCC or -XCXC, where both cysteines may become modified. Acts on YPT1 and SEC4. In Candida albicans (Yeast), this protein is Geranylgeranyl transferase type-2 subunit alpha (BET4).